The following is a 197-amino-acid chain: Imidazoleglycerol-phosphate dehydratase (197 aa).

The protein belongs to the imidazoleglycerol-phosphate dehydratase family.

Its subcellular location is the cytoplasm. It catalyses the reaction D-erythro-1-(imidazol-4-yl)glycerol 3-phosphate = 3-(imidazol-4-yl)-2-oxopropyl phosphate + H2O. Its pathway is amino-acid biosynthesis; L-histidine biosynthesis; L-histidine from 5-phospho-alpha-D-ribose 1-diphosphate: step 6/9. The polypeptide is Imidazoleglycerol-phosphate dehydratase (Pseudomonas putida (strain W619)).